Here is a 295-residue protein sequence, read N- to C-terminus: 4-hydroxy-tetrahydrodipicolinate synthase (295 aa).

Threonine 47 is a pyruvate binding site. Catalysis depends on tyrosine 135, which acts as the Proton donor/acceptor. The active-site Schiff-base intermediate with substrate is lysine 163. Isoleucine 206 is a pyruvate binding site.

This sequence belongs to the DapA family. In terms of assembly, homodimer.

It is found in the cytoplasm. It catalyses the reaction L-aspartate 4-semialdehyde + pyruvate = (2S,4S)-4-hydroxy-2,3,4,5-tetrahydrodipicolinate + H2O + H(+). The protein operates within amino-acid biosynthesis; L-lysine biosynthesis via DAP pathway; (S)-tetrahydrodipicolinate from L-aspartate: step 3/4. Functionally, catalyzes the condensation of (S)-aspartate-beta-semialdehyde [(S)-ASA] and pyruvate to 4-hydroxy-tetrahydrodipicolinate (HTPA). The polypeptide is 4-hydroxy-tetrahydrodipicolinate synthase (Staphylococcus aureus (strain Mu50 / ATCC 700699)).